A 51-amino-acid chain; its full sequence is Ovomucoid (51 aa).

Positions 3–51 constitute a Kazal-like domain; sequence VDCSGYPKPACTLEYFPLCGSDNQTYANKCAFCNAVVEKNVTLRHLGKC. 3 disulfides stabilise this stretch: Cys5–Cys35, Cys13–Cys32, and Cys21–Cys51. An N-linked (GlcNAc...) asparagine glycan is attached at Asn42.

The protein resides in the secreted. In Nothoprocta cinerascens (Brushland tinamou), this protein is Ovomucoid.